The chain runs to 397 residues: Odorant receptor 98a (397 aa).

Topologically, residues 1–43 (MLFNYLRKPNPTNLLTSPDSFRYFEYGMFCMGWHTPATHKIIY) are cytoplasmic. The helical transmembrane segment at 44-64 (YITSCLIFAWCAVYLPIGIII) threads the bilayer. Residues 65–77 (SFKTDINTFTPNE) are Extracellular-facing. A helical membrane pass occupies residues 78–98 (LLTVMQLFFNSVGMPFKVLFF). Over 99 to 138 (NLYISGFYKAKKLLSEMDKRCTTLKERVEVHQGVVRCNKA) the chain is Cytoplasmic. Residues 139-159 (YLIYQFIYTAYTISTFLSAAL) traverse the membrane as a helical segment. The Extracellular segment spans residues 160–192 (SGKLPWRIYNPFVDFRESRSSFWKAALNETALM). N-linked (GlcNAc...) asparagine glycosylation is present at N187. The chain crosses the membrane as a helical span at residues 193-213 (LFAVTQTLMSDIYPLLYGLIL). The Cytoplasmic segment spans residues 214–266 (RVHLKLLRLRVESLCTDSGKSDAENEQDLIKCIKDHNLIIDYAAAIRPAVTRT). A helical transmembrane segment spans residues 267 to 287 (IFVQFLLIGICLGLSMINLLF). The Extracellular segment spans residues 288 to 293 (FADIWT). A helical transmembrane segment spans residues 294–314 (GLATVAYINGLMVQTFPFCFV). The Cytoplasmic segment spans residues 315-354 (CDLLKKDCELLVSAIFHSNWINSSRSYKSSLRYFLKNAQK). Residues 355 to 375 (SIAFTAGSIFPISTGSNIKVA) form a helical membrane-spanning segment. The Extracellular segment spans residues 376–397 (KLAFSVVTFVNQLNIADRLTKN).

This sequence belongs to the insect chemoreceptor superfamily. Heteromeric odorant receptor channel (TC 1.A.69) family. Or2a subfamily. Interacts with Orco. Complexes exist early in the endomembrane system in olfactory sensory neurons (OSNs), coupling these complexes to the conserved ciliary trafficking pathway. Expressed in olfactory sensory neurons in the antenna.

The protein resides in the cell membrane. Its function is as follows. Odorant receptor which mediates acceptance or avoidance behavior, depending on its substrates. The odorant receptor repertoire encodes a large collection of odor stimuli that vary widely in identity, intensity, and duration. May form a complex with Orco to form odorant-sensing units, providing sensitive and prolonged odorant signaling and calcium permeability. The chain is Odorant receptor 98a (Or98a) from Drosophila melanogaster (Fruit fly).